A 420-amino-acid polypeptide reads, in one-letter code: Tyrosine--tRNA ligase (420 aa).

Tyrosine 33 lines the L-tyrosine pocket. A 'HIGH' region motif is present at residues 38–47; the sequence is PTGDSLHAGH. L-tyrosine contacts are provided by tyrosine 167 and glutamine 171. The 'KMSKS' region signature appears at 227–231; the sequence is KFGKS. Lysine 230 is an ATP binding site. Residues 352-418 form the S4 RNA-binding domain; the sequence is PTIIDLLIGA…GKKNFAGVKY (67 aa).

The protein belongs to the class-I aminoacyl-tRNA synthetase family. TyrS type 1 subfamily. In terms of assembly, homodimer.

It is found in the cytoplasm. The catalysed reaction is tRNA(Tyr) + L-tyrosine + ATP = L-tyrosyl-tRNA(Tyr) + AMP + diphosphate + H(+). Catalyzes the attachment of tyrosine to tRNA(Tyr) in a two-step reaction: tyrosine is first activated by ATP to form Tyr-AMP and then transferred to the acceptor end of tRNA(Tyr). The protein is Tyrosine--tRNA ligase of Corynebacterium diphtheriae (strain ATCC 700971 / NCTC 13129 / Biotype gravis).